The sequence spans 637 residues: Threonine--tRNA ligase (637 aa).

The region spanning 1–61 (MPVITLPDGS…DKDAELAIVT (61 aa)) is the TGS domain. Residues 242 to 533 (DHRKIGKKLG…LIEHYEGAFP (292 aa)) form a catalytic region. Positions 333, 384, and 510 each coordinate Zn(2+).

It belongs to the class-II aminoacyl-tRNA synthetase family. Homodimer. Zn(2+) serves as cofactor.

It localises to the cytoplasm. It carries out the reaction tRNA(Thr) + L-threonine + ATP = L-threonyl-tRNA(Thr) + AMP + diphosphate + H(+). Catalyzes the attachment of threonine to tRNA(Thr) in a two-step reaction: L-threonine is first activated by ATP to form Thr-AMP and then transferred to the acceptor end of tRNA(Thr). Also edits incorrectly charged L-seryl-tRNA(Thr). The polypeptide is Threonine--tRNA ligase (Hahella chejuensis (strain KCTC 2396)).